A 213-amino-acid polypeptide reads, in one-letter code: dITP/XTP pyrophosphatase (213 aa).

Residue 17 to 22 (SNNAGK) participates in substrate binding. The Mg(2+) site is built by Glu-49 and Asp-78. Asp-78 functions as the Proton acceptor in the catalytic mechanism. Substrate contacts are provided by residues Ser-79, 164–167 (FGYD), Lys-187, and 192–193 (HR).

This sequence belongs to the HAM1 NTPase family. In terms of assembly, homodimer. The cofactor is Mg(2+).

It carries out the reaction XTP + H2O = XMP + diphosphate + H(+). The enzyme catalyses dITP + H2O = dIMP + diphosphate + H(+). It catalyses the reaction ITP + H2O = IMP + diphosphate + H(+). Its function is as follows. Pyrophosphatase that catalyzes the hydrolysis of nucleoside triphosphates to their monophosphate derivatives, with a high preference for the non-canonical purine nucleotides XTP (xanthosine triphosphate), dITP (deoxyinosine triphosphate) and ITP. Seems to function as a house-cleaning enzyme that removes non-canonical purine nucleotides from the nucleotide pool, thus preventing their incorporation into DNA/RNA and avoiding chromosomal lesions. The sequence is that of dITP/XTP pyrophosphatase from Bordetella bronchiseptica (strain ATCC BAA-588 / NCTC 13252 / RB50) (Alcaligenes bronchisepticus).